The following is a 448-amino-acid chain: MSHRYIPLTEKDKQEMLQTIGAKSIGELFGDVPSDILLNRDLNIAEGEAETTLLRRLNRIASKNITKETHTSFLGAGVYDHYAPSVVDAMISRSEFYTAYTPYQPEISQGELQAIFEFQTLICELTDMDVANSSMYDGMTSFAEACILAFSQTKKNKIVVSKGLHYQALQVLHTYAKTRKEFEVVEIDLDGTVTDLKKLEAAVDDETAAVAVQYPNFYGSIEDLEKIQSFIEDKKALFIVYANPLALGLLTPPGSFGADIVVGDTQPFGIPAQFGGPHCGYFATTKKLMRKVPGRLVGQTQDDEGNRGFVLTLQAREQHIRRDKATSNICSNQALNALASSIAMSALGKQGIYDIAVQNIEHANYAKQQFIKKGFEVLDGTSFNEFVVKFDKPIQQVNEELVKYNIIGGFDLGVVSDDFKNHMLIAVTELRTKDEIDTFVEKAGELND.

Belongs to the GcvP family. N-terminal subunit subfamily. As to quaternary structure, the glycine cleavage system is composed of four proteins: P, T, L and H. In this organism, the P 'protein' is a heterodimer of two subunits.

The enzyme catalyses N(6)-[(R)-lipoyl]-L-lysyl-[glycine-cleavage complex H protein] + glycine + H(+) = N(6)-[(R)-S(8)-aminomethyldihydrolipoyl]-L-lysyl-[glycine-cleavage complex H protein] + CO2. The glycine cleavage system catalyzes the degradation of glycine. The P protein binds the alpha-amino group of glycine through its pyridoxal phosphate cofactor; CO(2) is released and the remaining methylamine moiety is then transferred to the lipoamide cofactor of the H protein. This Staphylococcus aureus (strain Mu3 / ATCC 700698) protein is Probable glycine dehydrogenase (decarboxylating) subunit 1.